Here is a 93-residue protein sequence, read N- to C-terminus: Small ribosomal subunit protein uS17 (93 aa).

Belongs to the universal ribosomal protein uS17 family. In terms of assembly, part of the 30S ribosomal subunit.

In terms of biological role, one of the primary rRNA binding proteins, it binds specifically to the 5'-end of 16S ribosomal RNA. The polypeptide is Small ribosomal subunit protein uS17 (Bordetella avium (strain 197N)).